We begin with the raw amino-acid sequence, 137 residues long: MRPQQAPVSGKVFIQRDYSSGTRCQFQTKFPAELENRIDRQQFEETVRTLNNLYAEAEKLGGQSYLEGCLACLTAYTIFLCMETHYEKVLKKVSKYIQEQNEKIYAPQGLLLTDPIERGLRVIEITIYEDRGMSSGR.

Residues cysteine 69 and cysteine 72 are each lipidated (S-palmitoyl cysteine).

This sequence belongs to the ERF4 family. In terms of assembly, interacts with GOLGA3. Interacts with ZDHHC9. In terms of processing, palmitoylated on Cys-69 and Cys-72; which is required for Golgi localization and interaction with GOLGA3.

It localises to the golgi apparatus membrane. Its function is as follows. May be involved in protein transport from Golgi to cell surface. The ZDHHC9-GOLGA7 complex is a palmitoyltransferase specific for HRAS and NRAS. In Bos taurus (Bovine), this protein is Golgin subfamily A member 7 (GOLGA7).